The primary structure comprises 76 residues: Paralithocin 3 (76 aa).

A signal peptide spans 1 to 23 (MGPMKVLLVMLVVMVAAPHIADA). 4 cysteine pairs are disulfide-bonded: Cys-31–Cys-62, Cys-40–Cys-58, Cys-44–Cys-56, and Cys-49–Cys-59. Pro-74 bears the Proline amide; partial mark.

Belongs to the paralithocin family. In terms of processing, the amidated form is probably the active form.

Its function is as follows. Has antibacterial activity, mainly against marine Gram-positive bacteria like C.maltaromaticum (MIC=25 uM), C.mobile (MIC=12.5 uM), C.divergens (MIC=25 uM) and C.funditum (MIC=12.5 uM) but also against C.glutamicum (MIC=12.5 uM). Has very little or no activity against Gram-negative bacteria. In Paralithodes camtschaticus (Red king crab), this protein is Paralithocin 3.